The primary structure comprises 454 residues: F-box/WD repeat-containing protein 2 (454 aa).

Residues 54-101 enclose the F-box domain; sequence RDFLKLLPLELSFYLLKWLDPQTLLTCCLVSKQWNKVISACTEVWQTA. WD repeat units lie at residues 139–175, 179–213, 217–255, 259–306, 313–352, 364–403, and 410–452; these read FETS…LWDV, QCVY…CWEW, ARTQ…VWAL, TCLN…IWPI, KCLK…QWDF, PEIA…RWPL, and KRGS…LWKE. The residue at position 298 (lysine 298) is an N6-acetyllysine.

As to quaternary structure, directly interacts with SKP1 and CUL1.

Its function is as follows. Substrate-recognition component of the SCF (SKP1-CUL1-F-box protein)-type E3 ubiquitin ligase complex. The sequence is that of F-box/WD repeat-containing protein 2 (FBXW2) from Homo sapiens (Human).